The following is a 302-amino-acid chain: Protein NEOXANTHIN-DEFICIENT 1 (302 aa).

Its function is as follows. Required for neoxanthin biosynthesis. Probably not involved directly in the enzymatic conversion of violaxanthin to neoxanthin. Is necessary but not sufficient for neoxanthin synthesis. This chain is Protein NEOXANTHIN-DEFICIENT 1, found in Oryza sativa subsp. japonica (Rice).